The chain runs to 148 residues: Small ribosomal subunit protein bS16 (148 aa).

Residues 107 to 148 are disordered; the sequence is AAARAAAGAEDRPATTPKKAKKAASADGADAPAADAPTAAGQ. Positions 129 to 148 are enriched in low complexity; the sequence is AASADGADAPAADAPTAAGQ.

The protein belongs to the bacterial ribosomal protein bS16 family.

The sequence is that of Small ribosomal subunit protein bS16 from Frankia alni (strain DSM 45986 / CECT 9034 / ACN14a).